The chain runs to 404 residues: ORC1-type DNA replication protein 2 (404 aa).

Residues 64–68, Y205, and R217 contribute to the ATP site; that span reads TGKTS.

This sequence belongs to the CDC6/cdc18 family. In terms of assembly, interacts with MCM.

Its function is as follows. Involved in regulation of DNA replication. Stimulates the helicase activity of MCM via stimulation of its ATPase activity. Binding to MCM may result in conformational changes in MCM, leading to catalytic ATP hydrolysis by the helicase. Directly stimulates MCM movement along single-stranded and double-stranded DNA. Does not bind DNA. The sequence is that of ORC1-type DNA replication protein 2 (cdc6-2) from Thermoplasma acidophilum (strain ATCC 25905 / DSM 1728 / JCM 9062 / NBRC 15155 / AMRC-C165).